Consider the following 210-residue polypeptide: Endo-1,4-beta-xylanase A (210 aa).

The N-terminal stretch at 1–19 (MKLKKKMLTLLLTASMSFG) is a signal peptide. Positions 20–210 (LFGATSSAAT…SSGRSNVTVW (191 aa)) constitute a GH11 domain. The active-site Nucleophile is the Glu104. Glu197 serves as the catalytic Proton donor.

Belongs to the glycosyl hydrolase 11 (cellulase G) family.

The enzyme catalyses Endohydrolysis of (1-&gt;4)-beta-D-xylosidic linkages in xylans.. The protein operates within glycan degradation; xylan degradation. In Geobacillus stearothermophilus (Bacillus stearothermophilus), this protein is Endo-1,4-beta-xylanase A (xynA).